Consider the following 116-residue polypeptide: Large ribosomal subunit protein bL17 (116 aa).

The protein belongs to the bacterial ribosomal protein bL17 family. In terms of assembly, part of the 50S ribosomal subunit. Contacts protein L32.

This chain is Large ribosomal subunit protein bL17, found in Synechococcus sp. (strain JA-2-3B'a(2-13)) (Cyanobacteria bacterium Yellowstone B-Prime).